The following is a 141-amino-acid chain: MLMPKRVKYRREHRGRMKGRAKGGTEVHFGEFGLQALESAWITNRQIEAARRAMTRYMKRGGKVWIRIFPSKPYTAKPLEVRMGSGKGAPEGWVAVVKPGKVMFEVAGVSEEVAREALRLASHKLPIKCKFVKREETGGEA.

It belongs to the universal ribosomal protein uL16 family. In terms of assembly, part of the 50S ribosomal subunit.

Its function is as follows. Binds 23S rRNA and is also seen to make contacts with the A and possibly P site tRNAs. This chain is Large ribosomal subunit protein uL16, found in Geobacillus thermodenitrificans (strain NG80-2).